The sequence spans 375 residues: Putative nuclease YhcG (375 aa).

In terms of assembly, interacts with DNA processing enzymes, including the restriction complex HsdMRS, the integrases IntF and IntS, and the recombinase PinE.

May be a nuclease involved in DNA recombination and repair. This chain is Putative nuclease YhcG (yhcG), found in Escherichia coli (strain K12).